Consider the following 262-residue polypeptide: Aconitate isomerase (262 aa).

Residues M1–A22 form the signal peptide.

Monomer.

It catalyses the reaction trans-aconitate = cis-aconitate. Its activity is regulated as follows. Activated more than 1.5 fold by Ca(2+), Mg(2+), Mn(2+), Ni(2+), Fe(2+), DDT and 1,10-phenanthroline. Strongly inhibited by Ag(+) and Hg(+). Inhibited by addition of 20% (v/v) glycerol. No effect by addition of NADH or NADPH. In terms of biological role, involved in assimilation of trans-aconitic acid. Preference for cis-aconitic acid is 14-fold higher than for trans-aconitic acid. Not active on intermediates of tricarboxylic acid (TCA) cycle including citric acid, succinic acid, fumaric acid, and 2-oxoglutaric acid or on other dicarboxilic acids including itaconic acid, formic acid, citraconic acid or maleic acid. The polypeptide is Aconitate isomerase (Pseudomonas sp).